The primary structure comprises 873 residues: MASRRKSTTPCMVLASEQDPDLELISDLDEGPPILTPVENAKAESVSSDEEVHGSVDSDNQQNKKVEGGYECKYCTFQTPDLNMFTFHVDSEHPNVVLNSSYVCVECNFLTKRYDALSEHNLKYHPGEENFKLTMVKRNNQTIFEQTINDLTFDGSFVKEENTEQGESIDVSSSGISISKTPIMKMMKNKVENKRITVHHNSAEGTSEEKENGVKASQEENAESVSSSALESNTSTSTINRVHPSPASTVVTPTAVLPGLAQVITAVSAQQNSNLLPKVLIPVNSIPTYNAALDNNPLLLNTYNKFPYPTMSEITVLSAQAKYTEEQIKIWFSAQRLKHGVSWTPEEVEEARRKQFNGTVHTVPQTITVIPTHISTGSNGLPSILQTCQIVGQPGLVLTQVAGTNTLPVTAPIALTVAGVPNQTNVQKSQVPAAQPATDTKPATAAVPSSPSVRPEAALVNPDSFGIRAKKTKEQLAELKVSYLKNQFPHDSEIIRLMKITGLTKGEIKKWFSDTRYNQRNSKSNQCLHLNNDSSATIIIDSSDETPEPPAAAASQQKQSWNPFPDFAPQKFKEKTAEQLRALQASFLNSSVLTDEEVNRLRAQTKLTRREIDAWFTEKNKTKALKDEKIEVDESNVGSSKEEPGESSPGDETVAPKSGGTGKICKKTPEQLHMLKSAFVRTQWPSAEEYDKLAEESGLARTDIVSWFGDTRYAWKNGNLKWYYYYQSSNSSSLNGLSSLRRRGRGRPKGRGRGRPRGRPRGGKRMNTWDRVPSLIKFKTGTAILKDYYLKHKFLNEQDLDELVNRSHMGYEQVREWFAERQRRSELGIELFEENEEEDEVVDDQEEDEEETDDSDTWEPPRHVKRKLSKSDD.

Residue T36 is modified to Phosphothreonine. The disordered stretch occupies residues 41–63 (AKAESVSSDEEVHGSVDSDNQQN). Phosphoserine occurs at positions 45, 47, and 48. Residues 50 to 63 (EEVHGSVDSDNQQN) are compositionally biased toward basic and acidic residues. C2H2-type zinc fingers lie at residues 70–93 (YECKYCTFQTPDLNMFTFHVDSEH) and 102–125 (YVCVECNFLTKRYDALSEHNLKYH). K159 is covalently cross-linked (Glycyl lysine isopeptide (Lys-Gly) (interchain with G-Cter in SUMO2)). The interval 198–247 (VHHNSAEGTSEEKENGVKASQEENAESVSSSALESNTSTSTINRVHPSPA) is disordered. At S202 the chain carries Phosphoserine. Over residues 223-238 (ESVSSSALESNTSTST) the composition is skewed to low complexity. The tract at residues 272–432 (NSNLLPKVLI…QTNVQKSQVP (161 aa)) is required for dimerization. The tract at residues 272-564 (NSNLLPKVLI…SQQKQSWNPF (293 aa)) is required for interaction with NFYA. Positions 284–346 (NSIPTYNAAL…LKHGVSWTPE (63 aa)) form a DNA-binding region, homeobox 1. The tract at residues 429-456 (SQVPAAQPATDTKPATAAVPSSPSVRPE) is disordered. Glycyl lysine isopeptide (Lys-Gly) (interchain with G-Cter in SUMO2) cross-links involve residues K441 and K485. Residues 464-526 (SFGIRAKKTK…YNQRNSKSNQ (63 aa)) constitute a DNA-binding region (homeobox 2). 3 disordered regions span residues 541–568 (DSSDETPEPPAAAASQQKQSWNPFPDFA), 627–668 (DEKI…CKKT), and 731–767 (SSSLNGLSSLRRRGRGRPKGRGRGRPRGRPRGGKRMN). The segment at residues 569-630 (PQKFKEKTAE…KTKALKDEKI (62 aa)) is a DNA-binding region (homeobox 3). K629 is covalently cross-linked (Glycyl lysine isopeptide (Lys-Gly) (interchain with G-Cter in SUMO2)). Residue S648 is modified to Phosphoserine. Residues 660–722 (GTGKICKKTP…YAWKNGNLKW (63 aa)) constitute a DNA-binding region (homeobox 4). The required for nuclear localization stretch occupies residues 734–768 (LNGLSSLRRRGRGRPKGRGRGRPRGRPRGGKRMNT). Basic residues predominate over residues 740–764 (LRRRGRGRPKGRGRGRPRGRPRGGK). Residue S774 is modified to Phosphoserine. Residues 777-832 (KFKTGTAILKDYYLKHKFLNEQDLDELVNRSHMGYEQVREWFAERQRRSELGIELF) constitute a DNA-binding region (homeobox 5). A disordered region spans residues 829–873 (IELFEENEEEDEVVDDQEEDEEETDDSDTWEPPRHVKRKLSKSDD). The span at 831-857 (LFEENEEEDEVVDDQEEDEEETDDSDT) shows a compositional bias: acidic residues. The tract at residues 831–873 (LFEENEEEDEVVDDQEEDEEETDDSDTWEPPRHVKRKLSKSDD) is required for repressor activity. Residues 863-873 (HVKRKLSKSDD) are compositionally biased toward basic residues.

It belongs to the ZHX family. Forms homodimers. Heterodimer (via HD1 domain) with ZHX2 (via HD1 domain). Also forms a heterodimer with ZHX3 which is a prerequisite for repressor activity. Interacts with ATF7IP and NFYA. Interacts (via homeobox domains) with DNMT3B (via PWWP domain). Widely expressed with highest levels in brain.

It is found in the nucleus. Its function is as follows. Acts as a transcriptional repressor. Increases DNMT3B-mediated repressive transcriptional activity when DNMT3B is tethered to DNA. May link molecule between DNMT3B and other co-repressor proteins. This Mus musculus (Mouse) protein is Zinc fingers and homeoboxes protein 1 (Zhx1).